Consider the following 65-residue polypeptide: Small ribosomal subunit protein bS21 (65 aa).

The segment at 45–65 is disordered; that stretch reads GRLKRSRSRRRAQRANEERNS. Residues 48–57 show a composition bias toward basic residues; it reads KRSRSRRRAQ.

Belongs to the bacterial ribosomal protein bS21 family.

The sequence is that of Small ribosomal subunit protein bS21 from Pelodictyon phaeoclathratiforme (strain DSM 5477 / BU-1).